We begin with the raw amino-acid sequence, 437 residues long: Nuclear hormone receptor family member nhr-28 (437 aa).

Residues 5–80 constitute a DNA-binding region (nuclear receptor); that stretch reads KSPCSVCGEA…VGMRKSAVQR (76 aa). NR C4-type zinc fingers lie at residues 8–28 and 44–68; these read CSVC…CRAC and CRAM…FTKC. The 262-residue stretch at 115–376 folds into the NR LBD domain; sequence YEETGMPTLS…ETFYELVSGR (262 aa).

The protein belongs to the nuclear hormone receptor family. Expressed in the pharynx, intestine and hypodermis.

The protein resides in the nucleus. Orphan nuclear receptor. In Caenorhabditis elegans, this protein is Nuclear hormone receptor family member nhr-28 (nhr-28).